The following is a 570-amino-acid chain: Urease subunit alpha 1 (570 aa).

The region spanning 131–570 (GGIDTHVHFI…VPMAQRYFLF (440 aa)) is the Urease domain. Positions 136, 138, and 219 each coordinate Ni(2+). Lys219 is subject to N6-carboxylysine. His221 is a substrate binding site. Positions 248 and 274 each coordinate Ni(2+). His322 functions as the Proton donor in the catalytic mechanism. Position 362 (Asp362) interacts with Ni(2+).

Belongs to the metallo-dependent hydrolases superfamily. Urease alpha subunit family. As to quaternary structure, heterotrimer of UreA (gamma), UreB (beta) and UreC (alpha) subunits. Three heterotrimers associate to form the active enzyme. Ni cation is required as a cofactor. Post-translationally, carboxylation allows a single lysine to coordinate two nickel ions.

The protein resides in the cytoplasm. It carries out the reaction urea + 2 H2O + H(+) = hydrogencarbonate + 2 NH4(+). It participates in nitrogen metabolism; urea degradation; CO(2) and NH(3) from urea (urease route): step 1/1. In terms of biological role, may protect brucellae during their passage through the stomach. The major route of infection in human brucellosis is oral. This chain is Urease subunit alpha 1, found in Brucella abortus (strain 2308).